The primary structure comprises 408 residues: Snake venom 5'-nucleotidase (408 aa).

Residues His-54 and His-77 each coordinate Zn(2+). N-linked (GlcNAc...) asparagine glycans are attached at residues Asn-167 and Asn-181. Cystine bridges form between Cys-187–Cys-192 and Cys-199–Cys-221. AMP is bound at residue Arg-188. Residues Asn-224, Arg-229, and Phe-252 each contribute to the AMP site. Cys-311 and Cys-314 form a disulfide bridge. 2 residues coordinate AMP: Phe-335 and Asp-341. 2 propeptides (removed in mature form) span residues 385 to 388 (DGTL) and 385 to 408 (DGTL…FFIL).

The protein belongs to the 5'-nucleotidase family. In terms of assembly, homodimer. Post-translationally, venom 5'-nucleotidases (or a part thereof) may be released into the venom via exosome-like vesicles. They may be attached via a GPI anchor to the membrane of these vesicles. Soluble forms of 5'-nucleotidase might be released by cleavage of the ectodomain in the exosome-like vesicles or venom gland cells. Expressed by the venom gland.

The protein resides in the membrane. It carries out the reaction a ribonucleoside 5'-phosphate + H2O = a ribonucleoside + phosphate. The catalysed reaction is AMP + H2O = adenosine + phosphate. The enzyme catalyses GMP + H2O = guanosine + phosphate. It catalyses the reaction ADP + H2O = AMP + phosphate + H(+). Is potently inhibited by metal ions Fe(3+), Cu(2+) and Zn(2+). Is enhanced by Mn(2+). Ca(2+) and Mg(2+) have no effect. Its function is as follows. Hydrolyzes nucleotides into nucleosides. Prefers AMP as the substrate but also cleaves GMP and ADP. Does not affect AMP, cAMP and cGMP. Inhibits ADP- and collagen-induced platelet aggregation. Snake venom 5'-nucleotidases are widely distributed among venomous snake taxa, but there is a lack of information about their biological activities. They have been shown to inhibit platelet aggregation. This effect may be due to the liberation of inhibitory AMP or adenosine by its action on ADP released upon initiation of aggregation. Venom 5'-nucleotidases are also known to synergistically act in vivo with other toxins like ADPases, phospholipases, and disintegrins to exert a more pronounced anti-coagulant effect. The protein is Snake venom 5'-nucleotidase of Macrovipera lebetinus (Levantine viper).